The chain runs to 258 residues: Ubiquinone/menaquinone biosynthesis C-methyltransferase UbiE (258 aa).

Residues threonine 81, aspartate 102, and 130 to 131 (NA) contribute to the S-adenosyl-L-methionine site.

This sequence belongs to the class I-like SAM-binding methyltransferase superfamily. MenG/UbiE family.

It catalyses the reaction a 2-demethylmenaquinol + S-adenosyl-L-methionine = a menaquinol + S-adenosyl-L-homocysteine + H(+). It carries out the reaction a 2-methoxy-6-(all-trans-polyprenyl)benzene-1,4-diol + S-adenosyl-L-methionine = a 5-methoxy-2-methyl-3-(all-trans-polyprenyl)benzene-1,4-diol + S-adenosyl-L-homocysteine + H(+). It participates in quinol/quinone metabolism; menaquinone biosynthesis; menaquinol from 1,4-dihydroxy-2-naphthoate: step 2/2. It functions in the pathway cofactor biosynthesis; ubiquinone biosynthesis. In terms of biological role, methyltransferase required for the conversion of demethylmenaquinol (DMKH2) to menaquinol (MKH2) and the conversion of 2-polyprenyl-6-methoxy-1,4-benzoquinol (DDMQH2) to 2-polyprenyl-3-methyl-6-methoxy-1,4-benzoquinol (DMQH2). The protein is Ubiquinone/menaquinone biosynthesis C-methyltransferase UbiE of Rhizobium rhizogenes (strain K84 / ATCC BAA-868) (Agrobacterium radiobacter).